A 206-amino-acid polypeptide reads, in one-letter code: dCTP deaminase, dUMP-forming (206 aa).

DCTP contacts are provided by residues 117-122 (RSSFGR), D135, 143-145 (TLE), Q163, Y177, K184, and Q188. E145 (proton donor/acceptor) is an active-site residue.

This sequence belongs to the dCTP deaminase family. As to quaternary structure, homotrimer.

The catalysed reaction is dCTP + 2 H2O = dUMP + NH4(+) + diphosphate. The protein operates within pyrimidine metabolism; dUMP biosynthesis; dUMP from dCTP: step 1/1. Functionally, bifunctional enzyme that catalyzes both the deamination of dCTP to dUTP and the hydrolysis of dUTP to dUMP without releasing the toxic dUTP intermediate. This is dCTP deaminase, dUMP-forming from Methanococcus maripaludis (strain C5 / ATCC BAA-1333).